Reading from the N-terminus, the 410-residue chain is Protein disulfide isomerase CRELD1 (410 aa).

Residues 1 to 29 (MGMSRRMFLTVYGSLWLLLLLSRPGVSKP) form the signal peptide. Topologically, residues 30 to 352 (QLCQTCQNLV…GLFDDITDDE (323 aa)) are extracellular. The short motif at 32-35 (CQTC) is the CXXC element. 4 disulfides stabilise this stretch: C32-C35, C141-C155, C149-C167, and C169-C178. An EGF-like 1 domain is found at 139 to 179 (LSCPGGTEKPCSGNGQCNGDGTRFGTGVCDCYTSYGGPVCM). FU repeat units lie at residues 194-243 (HLVC…DHCK) and 254-301 (SYEC…ELPK). Residues 264 to 267 (CIGC) carry the CXXC motif. Cystine bridges form between C264/C267, C295/C309, C302/C318, and C320/C331. Residues 291-332 (DVDECDSELPKCKGSHEECVNTEGSFTCVCEKDYSRIDGMCR) form the EGF-like 2; calcium-binding domain. A helical membrane pass occupies residues 353 to 373 (VVVLQQMFFGVVICALATLAA). Residue K374 is a topological domain, cytoplasmic. Residues 375–395 (GDMVFTAIFIGAVAAMAGYWL) form a helical membrane-spanning segment. Residues 396 to 410 (SEKGDRALDSFMKGR) are Extracellular-facing.

It belongs to the CRELD family.

The protein localises to the membrane. It carries out the reaction Catalyzes the rearrangement of -S-S- bonds in proteins.. Its function is as follows. Protein disulfide isomerase. Promotes the localization of acetylcholine receptors (AChRs) to the plasma membrane. The protein is Protein disulfide isomerase CRELD1 (creld1) of Xenopus tropicalis (Western clawed frog).